The chain runs to 248 residues: 3-deoxy-manno-octulosonate cytidylyltransferase (248 aa).

This sequence belongs to the KdsB family. The cofactor is Mg(2+).

It localises to the cytoplasm. The catalysed reaction is 3-deoxy-alpha-D-manno-oct-2-ulosonate + CTP = CMP-3-deoxy-beta-D-manno-octulosonate + diphosphate. Its pathway is nucleotide-sugar biosynthesis; CMP-3-deoxy-D-manno-octulosonate biosynthesis; CMP-3-deoxy-D-manno-octulosonate from 3-deoxy-D-manno-octulosonate and CTP: step 1/1. It functions in the pathway bacterial outer membrane biogenesis; lipopolysaccharide biosynthesis. In terms of biological role, activates KDO (a required 8-carbon sugar) for incorporation into bacterial lipopolysaccharide in Gram-negative bacteria. The chain is 3-deoxy-manno-octulosonate cytidylyltransferase from Escherichia coli O157:H7.